The sequence spans 876 residues: Valine--tRNA ligase (876 aa).

The short motif at 44 to 54 is the 'HIGH' region element; that stretch reads PNVTGKLHLGH. Residues 520 to 524 carry the 'KMSKS' region motif; the sequence is KMSKS. An ATP-binding site is contributed by Lys-523. Positions 805 to 876 form a coiled coil; the sequence is LEGLIDMDKE…VKARIEQLKA (72 aa).

It belongs to the class-I aminoacyl-tRNA synthetase family. ValS type 1 subfamily. Monomer.

The protein localises to the cytoplasm. It carries out the reaction tRNA(Val) + L-valine + ATP = L-valyl-tRNA(Val) + AMP + diphosphate. Functionally, catalyzes the attachment of valine to tRNA(Val). As ValRS can inadvertently accommodate and process structurally similar amino acids such as threonine, to avoid such errors, it has a 'posttransfer' editing activity that hydrolyzes mischarged Thr-tRNA(Val) in a tRNA-dependent manner. The chain is Valine--tRNA ligase from Staphylococcus aureus (strain bovine RF122 / ET3-1).